Consider the following 165-residue polypeptide: Transcription antitermination protein NusB (165 aa).

A disordered region spans residues 1-27 (MISDDTDQFNPRDAKSPEIAKGKSAKR). Positions 10-21 (NPRDAKSPEIAK) are enriched in basic and acidic residues.

This sequence belongs to the NusB family.

In terms of biological role, involved in transcription antitermination. Required for transcription of ribosomal RNA (rRNA) genes. Binds specifically to the boxA antiterminator sequence of the ribosomal RNA (rrn) operons. The sequence is that of Transcription antitermination protein NusB from Pseudomonas syringae pv. tomato (strain ATCC BAA-871 / DC3000).